A 738-amino-acid chain; its full sequence is Flowering time control protein FCA (738 aa).

Residues 1–118 are disordered; it reads MHRGGDRSTD…RGDHSDHDNR (118 aa). Gly residues-rich tracts occupy residues 52-70 and 81-98; these read RGGG…GGGR and SGGG…GEPG. Basic and acidic residues predominate over residues 109-118; that stretch reads RGDHSDHDNR. 2 RRM domains span residues 122-203 and 213-293; these read VKLF…YADG and HKLF…FADP. Disordered stretches follow at residues 292–414 and 566–594; these read DPKR…GHHL and QQSN…AIIP. Gly residues predominate over residues 301–311; sequence SRGGPAFGGPG. Polar residues predominate over residues 342–358; sequence HPSSPRSAPHQFNNFGS. Residues 368–377 are compositionally biased toward low complexity; that stretch reads TVTSTTDTAT. Polar residues-rich tracts occupy residues 383-401 and 575-594; these read FSGN…SSHM and PTQG…AIIP. The region spanning 609–642 is the WW domain; the sequence is VPLTCNWTEHTSPEGFKYYYNSITRESKWDKPEE. The tract at residues 670-738 is disordered; the sequence is MQQLQSPPQA…QSAQERAWKS (69 aa). The span at 683–706 shows a compositional bias: low complexity; the sequence is PAMQPVQQIPQAQQGQQQMQMKQQ. Over residues 723–732 the composition is skewed to polar residues; that stretch reads RIQQGIQSAQ.

As to quaternary structure, interacts with FY. Binds to SF1, FIK, RPRD1B, Os09g0509000/LOC_Os09g33480 and MADS8. Mostly expressed in young flowers (panicles) and stems, and also present in young seedlings leaves and roots.

Its subcellular location is the nucleus. Plays a major role in the promotion of the transition of the vegetative meristem to reproductive development. Required for RNA-mediated chromatin silencing of a range of loci in the genome. Cotranscriptionally recognizes aberrant RNA and marks it for silencing. Controls alternative cleavage and polyadenylation on pre-mRNAs and antisense RNAs. Regulates flowering time, seed size and cell volume, probably via the modulation of cell size. This Oryza sativa subsp. japonica (Rice) protein is Flowering time control protein FCA.